Consider the following 630-residue polypeptide: Sorting nexin-4 (630 aa).

2 stretches are compositionally biased toward polar residues: residues 1 to 11 (MSSEDQFTSIQ) and 19 to 28 (NTNNTPTDTT). The tract at residues 1-143 (MSSEDQFTSI…QQPQQQLASI (143 aa)) is disordered. The segment covering 32–49 (KSSKSKKSKKSSSKKKNG) has biased composition (basic residues). Low complexity predominate over residues 50 to 60 (NKISPSSTTET). Residues 81–94 (DDNHEVDDGNKEQN) are compositionally biased toward basic and acidic residues. Positions 130-143 (QQQLQQPQQQLASI) are enriched in low complexity. A PX domain is found at 187 to 321 (SIKTTVTHPN…HLFISNSNDW (135 aa)). Residues Arg243, Lys269, and Arg288 each contribute to the a 1,2-diacyl-sn-glycero-3-phospho-(1D-myo-inositol-3-phosphate) site. Coiled-coil stretches lie at residues 361–413 (SKHK…SNQI) and 550–581 (TIKS…INEE).

Belongs to the sorting nexin family.

The protein localises to the cytoplasm. It localises to the cytosol. The protein resides in the preautophagosomal structure membrane. Its subcellular location is the endosome membrane. Sorting nexin, involved in the separation or division of vacuoles throughout the entire life cycle of the cells. Involved in retrieval of late-Golgi SNAREs from post-Golgi endosomes to the trans-Golgi network, for cytoplasm to vacuole transport (Cvt), and autophagy of large cargos including mitophagy, pexophagy and glycophagy. The polypeptide is Sorting nexin-4 (SNX4) (Candida albicans (strain SC5314 / ATCC MYA-2876) (Yeast)).